Reading from the N-terminus, the 462-residue chain is Cysteine--tRNA ligase (462 aa).

Cysteine 24 provides a ligand contact to Zn(2+). A 'HIGH' region motif is present at residues 26 to 36; the sequence is PTVYDDAHLGH. Zn(2+) contacts are provided by cysteine 199, histidine 224, and glutamate 228. The short motif at 256 to 260 is the 'KMSKS' region element; it reads KMSKS. Position 259 (lysine 259) interacts with ATP.

The protein belongs to the class-I aminoacyl-tRNA synthetase family. Monomer. Zn(2+) is required as a cofactor.

The protein localises to the cytoplasm. It carries out the reaction tRNA(Cys) + L-cysteine + ATP = L-cysteinyl-tRNA(Cys) + AMP + diphosphate. The protein is Cysteine--tRNA ligase of Campylobacter jejuni subsp. jejuni serotype O:6 (strain 81116 / NCTC 11828).